A 189-amino-acid chain; its full sequence is UPF0301 protein RPR_01165 (189 aa).

This sequence belongs to the UPF0301 (AlgH) family.

The chain is UPF0301 protein RPR_01165 from Rickettsia peacockii (strain Rustic).